The following is a 650-amino-acid chain: Macrolide export ATP-binding/permease protein MacB (650 aa).

Residues 9 to 248 (IELIDLERVF…RPLGRPPGGA (240 aa)) enclose the ABC transporter domain. Residue 45 to 52 (GQSGSGKS) participates in ATP binding. Transmembrane regions (helical) follow at residues 276–296 (ALTL…MAIG), 525–545 (LTLL…IGVM), 580–600 (AVAV…GAAL), and 615–635 (PPIV…YLPA).

Belongs to the ABC transporter superfamily. Macrolide exporter (TC 3.A.1.122) family. Homodimer.

The protein localises to the cell inner membrane. Functionally, non-canonical ABC transporter that contains transmembrane domains (TMD), which form a pore in the inner membrane, and an ATP-binding domain (NBD), which is responsible for energy generation. Confers resistance against macrolides. This chain is Macrolide export ATP-binding/permease protein MacB, found in Rhodospirillum rubrum (strain ATCC 11170 / ATH 1.1.1 / DSM 467 / LMG 4362 / NCIMB 8255 / S1).